We begin with the raw amino-acid sequence, 779 residues long: Glucan endo-1,3-beta-D-glucosidase 2 (779 aa).

Positions 1–71 (MCYSRQAIPP…SNPLADSQVN (71 aa)) are disordered. Positions 57-71 (RTPSSSNPLADSQVN) are enriched in polar residues. The tract at residues 73 to 309 (DNIFQSPVLS…NGLICQLSAD (237 aa)) is beta-sandwich subdomain. Residues 73-779 (DNIFQSPVLS…WSLAYSGAFS (707 aa)) enclose the GH81 domain. The segment at 309–400 (DSVPSIDMAA…LTNSFDMQVQ (92 aa)) is alpha/beta subdomain. A sufficient for catalytic activity region spans residues 375 to 779 (IASSLDSTVK…WSLAYSGAFS (405 aa)). Residues 415–779 (NKKADYSQEK…WSLAYSGAFS (365 aa)) form a (alpha/beta)6 barrel subdomain region. The active site involves aspartate 526. (1,3-beta-D-glucosyl)n is bound by residues histidine 530, aspartate 607, glutamate 609, and glutamate 613. Catalysis depends on residues glutamate 609 and glutamate 613. A may provide specificity for triple-helical beta-glucan region spans residues 678–680 (KID). Tyrosine 691 contributes to the (1,3-beta-D-glucosyl)n binding site.

This sequence belongs to the glycosyl hydrolase 81 family.

It localises to the cytoplasm. It carries out the reaction Hydrolysis of (1-&gt;3)-beta-D-glucosidic linkages in (1-&gt;3)-beta-D-glucans.. With respect to regulation, inhibited by mercury ions. Cleaves internal linkages in 1,3-beta-glucan. The chain is Glucan endo-1,3-beta-D-glucosidase 2 from Saccharomyces cerevisiae (strain ATCC 204508 / S288c) (Baker's yeast).